Consider the following 488-residue polypeptide: Prostaglandin E2 receptor EP4 subtype (488 aa).

Topologically, residues 1 to 19 (MSTPGVNSSASLSPDRLNS) are extracellular. N-linked (GlcNAc...) asparagine glycosylation occurs at Asn7. The helical transmembrane segment at 20–43 (PVTIPAVMFIFGVVGNLVAIVVLC) threads the bilayer. Residues 44 to 55 (KSRKEQKETTFY) are Cytoplasmic-facing. Residues 56–79 (TLVCGLAVTDLLGTLLVSPVTIAT) form a helical membrane-spanning segment. The Extracellular portion of the chain corresponds to 80–96 (YMKGQWPGGQPLCEYST). Cysteines 92 and 170 form a disulfide. Residues 97 to 115 (FILLFFSLSGLSIICAMSV) form a helical membrane-spanning segment. Residues 116–135 (ERYLAINHAYFYSHYVDKRL) are Cytoplasmic-facing. A helical transmembrane segment spans residues 136 to 160 (AGLTLFAVYASNVLFCALPNMGLGS). At 161 to 184 (SRLQYPDTWCFIDWTTNVTAHAAY) the chain is on the extracellular side. The helical transmembrane segment at 185–211 (SYMYAGFSSFLILATVLCNVLVCGALL) threads the bilayer. At 212-267 (RMHRQFMRRTSLGTEQHHAAAAASVASRGHPAASPALPRLSDFRRRRSFRRIAGAE) the chain is on the cytoplasmic side. A helical transmembrane segment spans residues 268-295 (IQMVILLIATSLVVLICSIPLVVRVFVN). The Extracellular portion of the chain corresponds to 296 to 312 (QLYQPSLEREVSKNPDL). A helical transmembrane segment spans residues 313–332 (QAIRIASVNPILDPWIYILL). At 333 to 488 (RKTVLSKAIE…ETLNLSEKCI (156 aa)) the chain is on the cytoplasmic side. Positions 356 to 376 (RERSGQHCSDSQRTSSAMSGH) are disordered. Positions 361–376 (QHCSDSQRTSSAMSGH) are enriched in polar residues. A phosphoserine mark is found at Ser374, Ser377, Ser379, and Ser382. The span at 437–449 (SETSDSSQGQDSE) shows a compositional bias: polar residues. Residues 437–475 (SETSDSSQGQDSESVLLVDEAGGSGRAGPAPKGSSLQVT) are disordered.

It belongs to the G-protein coupled receptor 1 family. Interacts with FEM1A. Phosphorylation mediates agonist-mediated desensitization by promoting cytoplasmic retention. As to expression, high in intestine and in peripheral blood mononuclear cells; low in lung, kidney, thymus, uterus, vasculature and brain. Not found in liver, heart, retina oe skeletal muscle.

Its subcellular location is the cell membrane. In terms of biological role, receptor for prostaglandin E2 (PGE2). The activity of this receptor is mediated by G(s) proteins that stimulate adenylate cyclase. Has a relaxing effect on smooth muscle. May play an important role in regulating renal hemodynamics, intestinal epithelial transport, adrenal aldosterone secretion, and uterine function. The sequence is that of Prostaglandin E2 receptor EP4 subtype (PTGER4) from Homo sapiens (Human).